The following is a 148-amino-acid chain: Ribonuclease H (148 aa).

The RNase H type-1 domain occupies 3–144; that stretch reads DKEQVVIYTD…ADQLANRGVA (142 aa). D12, E50, D72, and D136 together coordinate Mg(2+). The disordered stretch occupies residues 125–148; sequence GHTGDPGNERADQLANRGVAELPR.

Belongs to the RNase H family. Monomer. Mg(2+) serves as cofactor.

The protein localises to the cytoplasm. It catalyses the reaction Endonucleolytic cleavage to 5'-phosphomonoester.. Endonuclease that specifically degrades the RNA of RNA-DNA hybrids. The polypeptide is Ribonuclease H (Pseudomonas paraeruginosa (strain DSM 24068 / PA7) (Pseudomonas aeruginosa (strain PA7))).